The sequence spans 568 residues: Kinetochore protein NDC80 homolog (568 aa).

The tract at residues 1 to 59 (MRGGAAGKRRTTVGFGGAPPPPPPSIEQQRHLFNSRDSDASFASSRPSSIGLGGRGASD) is disordered. Basic and acidic residues predominate over residues 28 to 39 (QQRHLFNSRDSD). Over residues 40-49 (ASFASSRPSS) the composition is skewed to low complexity. Coiled-coil stretches lie at residues 241–334 (KESL…AEVA) and 433–469 (IESKRSLLGSIQLQINDLEEKMKLVKKETQELSTKCD).

The protein belongs to the NDC80/HEC1 family. As to quaternary structure, component of the NDC80 complex, which consists of NDC80, NUF2, SPC24 and SPC25.

Its subcellular location is the chromosome. It is found in the centromere. Functionally, acts as a component of the essential kinetochore-associated NDC80 complex, which is required for chromosome segregation and spindle checkpoint activity to ensure proper cell division. The chain is Kinetochore protein NDC80 homolog from Arabidopsis thaliana (Mouse-ear cress).